We begin with the raw amino-acid sequence, 472 residues long: Spliceosome-associated protein CWC27 homolog (472 aa).

Ser-2 carries the N-acetylserine modification. In terms of domain architecture, PPIase cyclophilin-type spans 11–166; it reads TNGKVLLKTT…NPHKIKSCEV (156 aa). 2 N-linked (GlcNAc...) asparagine glycosylation sites follow: Asn-109 and Asn-201. A coiled-coil region spans residues 206–230; the sequence is SFGEEAEEEEEEVNRVSQSMKGKSK. Disordered stretches follow at residues 206 to 386 and 398 to 472; these read SFGE…DQTL and QAIA…KERR. A compositionally biased stretch (basic and acidic residues) spans 231–241; it reads SSHDLLKDDPH. Over residues 257-268 the composition is skewed to acidic residues; it reads DLVDDGEDESAE. 3 stretches are compositionally biased toward basic and acidic residues: residues 269 to 286, 304 to 347, and 359 to 371; these read HDEY…ERIA, EVEK…KRSE, and EYRR…EALR. Residues 306–377 are a coiled coil; sequence EKKSVSRSEE…EALRKQQSKK (72 aa). Position 346 is a phosphoserine (Ser-346). The span at 404-418 shows a compositional bias: acidic residues; sequence PENDIPETEVEDDEG. Basic and acidic residues-rich tracts occupy residues 425 to 437 and 457 to 472; these read QFED…KDAS and RREE…KERR.

This sequence belongs to the cyclophilin-type PPIase family. Part of the activated spliceosome B/catalytic step 1 spliceosome, one of the forms of the spliceosome which has a well-formed active site but still cannot catalyze the branching reaction and is composed at least of 52 proteins, the U2, U5 and U6 snRNAs and the pre-mRNA. Recruited during early steps of activated spliceosome B maturation, it is probably one of the first proteins released from this complex as he matures to the spliceosome C complex. Component of the minor spliceosome, which splices U12-type introns.

It is found in the nucleus. As part of the spliceosome, plays a role in pre-mRNA splicing. Probable inactive PPIase with no peptidyl-prolyl cis-trans isomerase activity. As a component of the minor spliceosome, involved in the splicing of U12-type introns in pre-mRNAs. The chain is Spliceosome-associated protein CWC27 homolog from Homo sapiens (Human).